The primary structure comprises 131 residues: D-ribose pyranase (131 aa).

The active-site Proton donor is His-20. Residues Asp-28, His-98, and 120-122 (YAN) contribute to the substrate site.

Belongs to the RbsD / FucU family. RbsD subfamily. In terms of assembly, homodecamer.

Its subcellular location is the cytoplasm. It carries out the reaction beta-D-ribopyranose = beta-D-ribofuranose. It functions in the pathway carbohydrate metabolism; D-ribose degradation; D-ribose 5-phosphate from beta-D-ribopyranose: step 1/2. Its function is as follows. Catalyzes the interconversion of beta-pyran and beta-furan forms of D-ribose. In Bacillus cytotoxicus (strain DSM 22905 / CIP 110041 / 391-98 / NVH 391-98), this protein is D-ribose pyranase.